Reading from the N-terminus, the 681-residue chain is DNA ligase (681 aa).

NAD(+) is bound by residues 35–39 (DAEYD), 84–85 (SL), and E115. The active-site N6-AMP-lysine intermediate is the K117. 4 residues coordinate NAD(+): R138, E175, K293, and K317. Zn(2+) is bound by residues C411, C414, C429, and C435. The BRCT domain occupies 598-681 (RTNLAVPGKT…SLLRDTSSSE (84 aa)).

This sequence belongs to the NAD-dependent DNA ligase family. LigA subfamily. It depends on Mg(2+) as a cofactor. The cofactor is Mn(2+).

It catalyses the reaction NAD(+) + (deoxyribonucleotide)n-3'-hydroxyl + 5'-phospho-(deoxyribonucleotide)m = (deoxyribonucleotide)n+m + AMP + beta-nicotinamide D-nucleotide.. Its function is as follows. DNA ligase that catalyzes the formation of phosphodiester linkages between 5'-phosphoryl and 3'-hydroxyl groups in double-stranded DNA using NAD as a coenzyme and as the energy source for the reaction. It is essential for DNA replication and repair of damaged DNA. The polypeptide is DNA ligase (Nitrosomonas europaea (strain ATCC 19718 / CIP 103999 / KCTC 2705 / NBRC 14298)).